We begin with the raw amino-acid sequence, 655 residues long: Archaeal Lon protease (655 aa).

The Cytoplasmic segment spans residues Met-1–Ser-123. Residue Gly-57–Ser-64 participates in ATP binding. A helical transmembrane segment spans residues Arg-124–Leu-144. Residue Arg-145 is a topological domain, extracellular. A helical membrane pass occupies residues Ser-146 to Phe-166. Residues Asn-167 to Ala-655 lie on the Cytoplasmic side of the membrane. Positions Gly-433 to Asn-618 constitute a Lon proteolytic domain. Residues Ser-525 and Lys-568 contribute to the active site.

The protein belongs to the peptidase S16 family. Archaeal LonB subfamily. Homohexamer. Organized in a ring with a central cavity.

The protein localises to the cell membrane. In terms of biological role, ATP-dependent serine protease that mediates the selective degradation of mutant and abnormal proteins as well as certain short-lived regulatory proteins. Degrades polypeptides processively. The chain is Archaeal Lon protease from Thermoplasma volcanium (strain ATCC 51530 / DSM 4299 / JCM 9571 / NBRC 15438 / GSS1).